Here is a 398-residue protein sequence, read N- to C-terminus: Transposase for insertion sequence element ISRM5 (398 aa).

Belongs to the transposase mutator family.

In terms of biological role, required for the transposition of the insertion element. The protein is Transposase for insertion sequence element ISRM5 of Rhizobium meliloti (strain 1021) (Ensifer meliloti).